We begin with the raw amino-acid sequence, 379 residues long: V-type proton ATPase subunit S1 (379 aa).

Residues 1 to 17 (MLWKSLIALCVIGAAVA) form the signal peptide. The Lumenal segment spans residues 18–333 (EQTPVFLWGA…WDCVGFVTPG (316 aa)). Asn-225 and Asn-284 each carry an N-linked (GlcNAc...) asparagine glycan. Cys-282 and Cys-326 form a disulfide bridge. A helical transmembrane segment spans residues 334–354 (ILMGLFVVALLLVIMFVGVCW). Topologically, residues 355 to 379 (MMDINTMDRFDDPKGKTITINAAAE) are cytoplasmic.

It belongs to the vacuolar ATPase subunit S1 family. As to quaternary structure, accessory component of the multisubunit proton-transporting vacuolar (V)-ATPase protein pump. May interact with ATP6AP2.

Its subcellular location is the endoplasmic reticulum membrane. Its function is as follows. Accessory subunit of the proton-transporting vacuolar (V)-ATPase protein pump, which is required for luminal acidification of secretory vesicles. This is V-type proton ATPase subunit S1 from Drosophila melanogaster (Fruit fly).